The chain runs to 279 residues: HTH-type transcriptional activator RhaS (279 aa).

An HTH araC/xylS-type domain is found at 175 to 273; that stretch reads QALLGWLQNN…SQAPKSLRHQ (99 aa). 2 DNA-binding regions (H-T-H motif) span residues 192 to 213 and 240 to 263; these read GSLA…KQHT and ITTI…RKAF.

Binds DNA as a dimer.

Its subcellular location is the cytoplasm. Functionally, activates expression of the rhaBAD and rhaT operons. This chain is HTH-type transcriptional activator RhaS, found in Pectobacterium carotovorum subsp. carotovorum (strain PC1).